The following is a 447-amino-acid chain: MDMGNQHPSISRLQEIQKEVKSVEQQVIGFSGLSDDKNYKKLERILTKQLFEIDSVDTEGKGDIQQARKRAAQETERLLKELEQNANHPHRIEIQNIFEEAQSLVREKIVPFYNGGNCVTDEFEEGIQDIILRLTHVKTGGKISLRKARYHTLTKICAVQEIIEDCMKKQPSLPLSEDAHPSVAKINFVMCEVNKARGVLIALLMGVNNNETCRHLSCVLSGLIADLDALDVCGRTEIRNYRREVVEDINKLLKYLDLEEEADTTKAFDLRQNHSILKIEKVLKRMREIKNELLQAQNPSELYLSSKTELQGLIGQLDEVSLEKNPCIREARRRAVIEVQTLITYIDLKEALEKRKLFACEEHPSHKAVWNVLGNLSEIQGEVLSFDGNRTDKNYIRLEELLTKQLLALDAVDPQGEEKCKAARKQAVRLAQNILSYLDLKSDEWEY.

5 consecutive BAG domains span residues 9 to 86, 95 to 167, 182 to 260, 275 to 350, and 365 to 442; these read SISR…EQNA, QNIF…EDCM, SVAK…DLEE, SILK…DLKE, and SHKA…DLKS.

In terms of assembly, binds to the ATPase domain of HSP/HSP70 chaperones. Binds PRKN. Interacts with HSPA8 and JPH2. In terms of tissue distribution, expressed in the heart.

Its function is as follows. Co-chaperone for HSP/HSP70 proteins. It functions as a nucleotide-exchange factor promoting the release of ADP from HSP70, thereby activating HSP70-mediated protein refolding. Has an essential role in maintaining proteostasis at junctional membrane complexes (JMC), where it may function as a scaffold between the HSPA8 chaperone and JMC proteins enabling correct, HSPA8-dependent JMC protein folding. Inhibits both auto-ubiquitination of PRKN and ubiquitination of target proteins by PRKN. This Homo sapiens (Human) protein is BAG family molecular chaperone regulator 5 (BAG5).